We begin with the raw amino-acid sequence, 338 residues long: HTH-type transcriptional regulator SyrM 1 (338 aa).

In terms of domain architecture, HTH lysR-type spans 35–92; sequence LDLNTLLALEALLEHRNVTQAARHLGLSQPSVSRALIRLRGVFNDDLLVRGSSGMVPT. A DNA-binding region (H-T-H motif) is located at residues 52 to 72; sequence VTQAARHLGLSQPSVSRALIR.

It belongs to the LysR transcriptional regulatory family.

In terms of biological role, transcriptional activator that regulates the expression of genes involved in symbiosis. Among other targets it acts on the nolWBTUV operon. The protein is HTH-type transcriptional regulator SyrM 1 (syrM1) of Sinorhizobium fredii (strain NBRC 101917 / NGR234).